The sequence spans 275 residues: MQAVQQEIAQALKVQPPFADAAALEAEVARRVAFIKDCLANARLKTLVLGISGGVDSLTAALLAQRAINELRAETGDKAYTFIAVRLPYQVQHDEHDAQACLEVIKADEVHTVDIAPAVRALAAEVAALKNGSPTLVDFVVGNVKARTRMVAQYTIAGARAGLVIGTDHAAEAVMGFFTKFGDGACDLAPLSGLVKNQVRAIARSFGAPESLVEKVPTADLEDLEPGKPDEASHGVTYAQIDAFLHGQPVDQAAFDIIVATYRKTQHKRELPFAP.

Residue 50 to 57 coordinates ATP; sequence GISGGVDS. Asp56 provides a ligand contact to Mg(2+). Residue Arg147 coordinates deamido-NAD(+). Position 167 (Thr167) interacts with ATP. Glu172 serves as a coordination point for Mg(2+). The deamido-NAD(+) site is built by Lys180 and Asp187. ATP contacts are provided by Lys196 and Thr218. Residue 267–268 participates in deamido-NAD(+) binding; sequence HK.

This sequence belongs to the NAD synthetase family. As to quaternary structure, homodimer.

It carries out the reaction deamido-NAD(+) + NH4(+) + ATP = AMP + diphosphate + NAD(+) + H(+). The protein operates within cofactor biosynthesis; NAD(+) biosynthesis; NAD(+) from deamido-NAD(+) (ammonia route): step 1/1. Catalyzes the ATP-dependent amidation of deamido-NAD to form NAD. Uses ammonia as a nitrogen source. The sequence is that of NH(3)-dependent NAD(+) synthetase from Pseudomonas putida (strain ATCC 47054 / DSM 6125 / CFBP 8728 / NCIMB 11950 / KT2440).